Here is a 224-residue protein sequence, read N- to C-terminus: Large ribosomal subunit protein bL25 (224 aa).

It belongs to the bacterial ribosomal protein bL25 family. CTC subfamily. In terms of assembly, part of the 50S ribosomal subunit; part of the 5S rRNA/L5/L18/L25 subcomplex. Contacts the 5S rRNA. Binds to the 5S rRNA independently of L5 and L18.

In terms of biological role, this is one of the proteins that binds to the 5S RNA in the ribosome where it forms part of the central protuberance. The protein is Large ribosomal subunit protein bL25 of Psychrobacter arcticus (strain DSM 17307 / VKM B-2377 / 273-4).